Here is a 338-residue protein sequence, read N- to C-terminus: Holliday junction branch migration complex subunit RuvB (338 aa).

Residues 1-181 form a large ATPase domain (RuvB-L) region; sequence MDRIVEIEKV…FGMDFRLQFY (181 aa). ATP contacts are provided by residues Leu20, Arg21, Gly62, Lys65, Thr66, Thr67, 128-130, Arg171, Tyr181, and Arg218; that span reads EDF. Thr66 lines the Mg(2+) pocket. Residues 182-252 are small ATPAse domain (RuvB-S); the sequence is STAELSRIIQ…RAKEGLNALG (71 aa). A head domain (RuvB-H) region spans residues 255 to 338; that stretch reads SLGFDEMDIK…NRTKGLFDGE (84 aa). 2 residues coordinate DNA: Arg309 and Arg314.

Belongs to the RuvB family. Homohexamer. Forms an RuvA(8)-RuvB(12)-Holliday junction (HJ) complex. HJ DNA is sandwiched between 2 RuvA tetramers; dsDNA enters through RuvA and exits via RuvB. An RuvB hexamer assembles on each DNA strand where it exits the tetramer. Each RuvB hexamer is contacted by two RuvA subunits (via domain III) on 2 adjacent RuvB subunits; this complex drives branch migration. In the full resolvosome a probable DNA-RuvA(4)-RuvB(12)-RuvC(2) complex forms which resolves the HJ.

The protein localises to the cytoplasm. The enzyme catalyses ATP + H2O = ADP + phosphate + H(+). The RuvA-RuvB-RuvC complex processes Holliday junction (HJ) DNA during genetic recombination and DNA repair, while the RuvA-RuvB complex plays an important role in the rescue of blocked DNA replication forks via replication fork reversal (RFR). RuvA specifically binds to HJ cruciform DNA, conferring on it an open structure. The RuvB hexamer acts as an ATP-dependent pump, pulling dsDNA into and through the RuvAB complex. RuvB forms 2 homohexamers on either side of HJ DNA bound by 1 or 2 RuvA tetramers; 4 subunits per hexamer contact DNA at a time. Coordinated motions by a converter formed by DNA-disengaged RuvB subunits stimulates ATP hydrolysis and nucleotide exchange. Immobilization of the converter enables RuvB to convert the ATP-contained energy into a lever motion, pulling 2 nucleotides of DNA out of the RuvA tetramer per ATP hydrolyzed, thus driving DNA branch migration. The RuvB motors rotate together with the DNA substrate, which together with the progressing nucleotide cycle form the mechanistic basis for DNA recombination by continuous HJ branch migration. Branch migration allows RuvC to scan DNA until it finds its consensus sequence, where it cleaves and resolves cruciform DNA. This chain is Holliday junction branch migration complex subunit RuvB, found in Campylobacter curvus (strain 525.92).